We begin with the raw amino-acid sequence, 1056 residues long: Isoleucine--tRNA ligase (1056 aa).

The 'HIGH' region signature appears at 56–66; the sequence is PFATGLPHYGH. Residues 603-607 carry the 'KMSKS' region motif; the sequence is KMSKS. Residue lysine 606 coordinates ATP.

The protein belongs to the class-I aminoacyl-tRNA synthetase family. IleS type 2 subfamily. Monomer. It depends on Zn(2+) as a cofactor.

Its subcellular location is the cytoplasm. It catalyses the reaction tRNA(Ile) + L-isoleucine + ATP = L-isoleucyl-tRNA(Ile) + AMP + diphosphate. Its function is as follows. Catalyzes the attachment of isoleucine to tRNA(Ile). As IleRS can inadvertently accommodate and process structurally similar amino acids such as valine, to avoid such errors it has two additional distinct tRNA(Ile)-dependent editing activities. One activity is designated as 'pretransfer' editing and involves the hydrolysis of activated Val-AMP. The other activity is designated 'posttransfer' editing and involves deacylation of mischarged Val-tRNA(Ile). This Bdellovibrio bacteriovorus (strain ATCC 15356 / DSM 50701 / NCIMB 9529 / HD100) protein is Isoleucine--tRNA ligase.